Here is a 336-residue protein sequence, read N- to C-terminus: Holliday junction branch migration complex subunit RuvB (336 aa).

A large ATPase domain (RuvB-L) region spans residues 4–184 (SDRLISSQSI…FGIVQRLEYY (181 aa)). ATP-binding positions include Ile-23, Arg-24, Gly-65, Lys-68, Thr-69, Thr-70, 131–133 (EDY), Arg-174, Tyr-184, and Arg-221. Residue Thr-69 coordinates Mg(2+). Residues 185–255 (SVDSLTKIVA…MAQQALEMLE (71 aa)) are small ATPAse domain (RuvB-S). Residues 258-336 (QHGFDLMDRK…HFGFSAIEQE (79 aa)) form a head domain (RuvB-H) region. Residues Arg-313 and Arg-318 each coordinate DNA.

This sequence belongs to the RuvB family. Homohexamer. Forms an RuvA(8)-RuvB(12)-Holliday junction (HJ) complex. HJ DNA is sandwiched between 2 RuvA tetramers; dsDNA enters through RuvA and exits via RuvB. An RuvB hexamer assembles on each DNA strand where it exits the tetramer. Each RuvB hexamer is contacted by two RuvA subunits (via domain III) on 2 adjacent RuvB subunits; this complex drives branch migration. In the full resolvosome a probable DNA-RuvA(4)-RuvB(12)-RuvC(2) complex forms which resolves the HJ.

It is found in the cytoplasm. It catalyses the reaction ATP + H2O = ADP + phosphate + H(+). The RuvA-RuvB-RuvC complex processes Holliday junction (HJ) DNA during genetic recombination and DNA repair, while the RuvA-RuvB complex plays an important role in the rescue of blocked DNA replication forks via replication fork reversal (RFR). RuvA specifically binds to HJ cruciform DNA, conferring on it an open structure. The RuvB hexamer acts as an ATP-dependent pump, pulling dsDNA into and through the RuvAB complex. RuvB forms 2 homohexamers on either side of HJ DNA bound by 1 or 2 RuvA tetramers; 4 subunits per hexamer contact DNA at a time. Coordinated motions by a converter formed by DNA-disengaged RuvB subunits stimulates ATP hydrolysis and nucleotide exchange. Immobilization of the converter enables RuvB to convert the ATP-contained energy into a lever motion, pulling 2 nucleotides of DNA out of the RuvA tetramer per ATP hydrolyzed, thus driving DNA branch migration. The RuvB motors rotate together with the DNA substrate, which together with the progressing nucleotide cycle form the mechanistic basis for DNA recombination by continuous HJ branch migration. Branch migration allows RuvC to scan DNA until it finds its consensus sequence, where it cleaves and resolves cruciform DNA. This Legionella pneumophila (strain Paris) protein is Holliday junction branch migration complex subunit RuvB.